The following is a 522-amino-acid chain: Alanine aminotransferase 2 (522 aa).

Lys340 carries the post-translational modification N6-(pyridoxal phosphate)lysine. N6-acetyllysine is present on residues Lys414, Lys504, and Lys511.

It belongs to the class-I pyridoxal-phosphate-dependent aminotransferase family. Alanine aminotransferase subfamily. In terms of assembly, homodimer. It depends on pyridoxal 5'-phosphate as a cofactor. As to expression, specifically induced in fatty liver. Highly expressed in muscle, liver and white adipose tissue. Moderately expressed in brain and kidney and expressed at low levels in the heart.

The enzyme catalyses L-alanine + 2-oxoglutarate = pyruvate + L-glutamate. It participates in amino-acid degradation; L-alanine degradation via transaminase pathway; pyruvate from L-alanine: step 1/1. Its function is as follows. Catalyzes the reversible transamination between alanine and 2-oxoglutarate to form pyruvate and glutamate. The protein is Alanine aminotransferase 2 (Gpt2) of Mus musculus (Mouse).